Here is a 351-residue protein sequence, read N- to C-terminus: N-acetyl-gamma-glutamyl-phosphate reductase (351 aa).

C150 is an active-site residue.

This sequence belongs to the NAGSA dehydrogenase family. Type 1 subfamily.

The protein localises to the cytoplasm. The enzyme catalyses N-acetyl-L-glutamate 5-semialdehyde + phosphate + NADP(+) = N-acetyl-L-glutamyl 5-phosphate + NADPH + H(+). Its pathway is amino-acid biosynthesis; L-arginine biosynthesis; N(2)-acetyl-L-ornithine from L-glutamate: step 3/4. In terms of biological role, catalyzes the NADPH-dependent reduction of N-acetyl-5-glutamyl phosphate to yield N-acetyl-L-glutamate 5-semialdehyde. The protein is N-acetyl-gamma-glutamyl-phosphate reductase of Heliobacterium modesticaldum (strain ATCC 51547 / Ice1).